The following is a 1072-amino-acid chain: Integrator complex subunit 3 homolog (1072 aa).

Disordered regions lie at residues 920-943 and 1002-1072; these read YPSS…STPS and DTTV…NDSD. Residues serine 1042, serine 1043, serine 1047, and serine 1048 each carry the phosphoserine modification.

It belongs to the Integrator subunit 3 family. As to quaternary structure, belongs to the multiprotein complex Integrator, at least composed of IntS1, IntS2, IntS3, IntS4, omd/IntS5, IntS6, defl/IntS7, IntS8, IntS9, IntS10, IntS11, IntS12, asun/IntS13, IntS14 and IntS15. The core complex associates with protein phosphatase 2A subunits mts/PP2A and Pp2A-29B, to form the Integrator-PP2A (INTAC) complex.

Its subcellular location is the nucleus. The protein resides in the cytoplasm. Its function is as follows. Component of the integrator complex, a multiprotein complex that terminates RNA polymerase II (Pol II) transcription in the promoter-proximal region of genes. The integrator complex provides a quality checkpoint during transcription elongation by driving premature transcription termination of transcripts that are unfavorably configured for transcriptional elongation: the complex terminates transcription by (1) catalyzing dephosphorylation of the C-terminal domain (CTD) of Pol II subunit Polr2A/Rbp1 and Spt5, and (2) degrading the exiting nascent RNA transcript via endonuclease activity. The integrator complex is also involved in the 3'-end processing of the U7 snRNA, and also the spliceosomal snRNAs U1, U2, U4 and U5. The sequence is that of Integrator complex subunit 3 homolog (IntS3) from Drosophila yakuba (Fruit fly).